A 408-amino-acid polypeptide reads, in one-letter code: Glutamate N-acetyltransferase (408 aa).

The substrate site is built by threonine 150, lysine 176, threonine 189, glutamate 271, asparagine 403, and threonine 408. Threonine 189 serves as the catalytic Nucleophile.

The protein belongs to the ArgJ family. Heterotetramer of two alpha and two beta chains.

Its subcellular location is the cytoplasm. The catalysed reaction is N(2)-acetyl-L-ornithine + L-glutamate = N-acetyl-L-glutamate + L-ornithine. Its pathway is amino-acid biosynthesis; L-arginine biosynthesis; L-ornithine and N-acetyl-L-glutamate from L-glutamate and N(2)-acetyl-L-ornithine (cyclic): step 1/1. Catalyzes the transfer of the acetyl group from N(2)-acetylornithine to glutamate, forming N-acetylglutamate and L-ornithine. The sequence is that of Glutamate N-acetyltransferase from Methanococcus vannielii (strain ATCC 35089 / DSM 1224 / JCM 13029 / OCM 148 / SB).